The sequence spans 357 residues: Peptide chain release factor 1 (357 aa).

N5-methylglutamine is present on Gln234. The tract at residues Arg284–Glu304 is disordered.

It belongs to the prokaryotic/mitochondrial release factor family. In terms of processing, methylated by PrmC. Methylation increases the termination efficiency of RF1.

The protein localises to the cytoplasm. Peptide chain release factor 1 directs the termination of translation in response to the peptide chain termination codons UAG and UAA. The protein is Peptide chain release factor 1 of Pelagibacter ubique (strain HTCC1062).